We begin with the raw amino-acid sequence, 56 residues long: Large ribosomal subunit protein bL33c (56 aa).

Belongs to the bacterial ribosomal protein bL33 family.

The protein localises to the plastid. It localises to the chloroplast. This is Large ribosomal subunit protein bL33c from Rhodomonas salina (Cryptomonas salina).